Here is a 489-residue protein sequence, read N- to C-terminus: Rhamnulokinase (489 aa).

Residue 13-17 (ASSGR) coordinates ATP. Cys-68 and Cys-222 are disulfide-bonded. Residues Gly-83 and 236-238 (HDT) contribute to the substrate site. The active-site Proton acceptor is the Asp-237. ATP is bound at residue Thr-259. Asn-296 serves as a coordination point for substrate. Gln-304 lines the ATP pocket. A disulfide bridge links Cys-353 with Cys-370. Gly-402 serves as a coordination point for ATP. A disulfide bond links Cys-413 and Cys-417.

This sequence belongs to the rhamnulokinase family. The cofactor is Mg(2+).

The enzyme catalyses L-rhamnulose + ATP = L-rhamnulose 1-phosphate + ADP + H(+). It functions in the pathway carbohydrate degradation; L-rhamnose degradation; glycerone phosphate from L-rhamnose: step 2/3. In terms of biological role, involved in the catabolism of L-rhamnose (6-deoxy-L-mannose). Catalyzes the transfer of the gamma-phosphate group from ATP to the 1-hydroxyl group of L-rhamnulose to yield L-rhamnulose 1-phosphate. The chain is Rhamnulokinase from Shigella flexneri serotype 5b (strain 8401).